A 108-amino-acid polypeptide reads, in one-letter code: Thiosulfate sulfurtransferase GlpE (108 aa).

The Rhodanese domain occupies 17–105; that stretch reads VSQSAILVDV…WLREFPQAIT (89 aa). Cys65 serves as the catalytic Cysteine persulfide intermediate.

The protein belongs to the GlpE family.

Its subcellular location is the cytoplasm. The enzyme catalyses thiosulfate + hydrogen cyanide = thiocyanate + sulfite + 2 H(+). It carries out the reaction thiosulfate + [thioredoxin]-dithiol = [thioredoxin]-disulfide + hydrogen sulfide + sulfite + 2 H(+). Functionally, transferase that catalyzes the transfer of sulfur from thiosulfate to thiophilic acceptors such as cyanide or dithiols. May function in a CysM-independent thiosulfate assimilation pathway by catalyzing the conversion of thiosulfate to sulfite, which can then be used for L-cysteine biosynthesis. The sequence is that of Thiosulfate sulfurtransferase GlpE from Proteus mirabilis (strain HI4320).